We begin with the raw amino-acid sequence, 167 residues long: Protein-export protein SecB (167 aa).

The protein belongs to the SecB family. As to quaternary structure, homotetramer, a dimer of dimers. One homotetramer interacts with 1 SecA dimer.

The protein localises to the cytoplasm. In terms of biological role, one of the proteins required for the normal export of preproteins out of the cell cytoplasm. It is a molecular chaperone that binds to a subset of precursor proteins, maintaining them in a translocation-competent state. It also specifically binds to its receptor SecA. The polypeptide is Protein-export protein SecB (Wolbachia pipientis wMel).